Consider the following 279-residue polypeptide: Methyltransferase ausD (279 aa).

S-adenosyl-L-methionine-binding positions include 124–125 (DI) and 152–153 (DV).

This sequence belongs to the class I-like SAM-binding methyltransferase superfamily. In terms of assembly, homodimer.

Its pathway is secondary metabolite biosynthesis; terpenoid biosynthesis. Functionally, methyltransferase; part of the gene cluster A that mediates the biosynthesis of the fungal meroterpenoid acetoxydehydroaustin. The first step of the pathway is the synthesis of 3,5-dimethylorsellinic acid by the polyketide synthase ausA. 3,5-dimethylorsellinic acid is then prenylated by the polyprenyl transferase ausN. Further epoxidation by the FAD-dependent monooxygenase ausM and cyclization by the probable terpene cyclase ausL lead to the formation of protoaustinoid A. Protoaustinoid A is then oxidized to spiro-lactone preaustinoid A3 by the combined action of the FAD-binding monooxygenases ausB and ausC, and the dioxygenase ausE. Acid-catalyzed keto-rearrangement and ring contraction of the tetraketide portion of preaustinoid A3 by ausJ lead to the formation of preaustinoid A4. The aldo-keto reductase ausK, with the help of ausH, is involved in the next step by transforming preaustinoid A4 into isoaustinone which is in turn hydroxylated by the P450 monooxygenase ausI to form austinolide. The cytochrome P450 monooxygenase ausG then modifies austinolide to austinol. Austinol is further acetylated to austin by the O-acetyltransferase ausP, which spontaneously changes to dehydroaustin. The cytochrome P450 monooxygenase then converts dehydroaustin is into 7-dehydrodehydroaustin. The hydroxylation catalyzed by ausR permits the second O-acetyltransferase ausQ to add an additional acetyl group to the molecule, leading to the formation of acetoxydehydroaustin. Due to genetic rearrangements of the clusters and the subsequent loss of some enzymes, the end product of the Penicillium brasilianum austinoid biosynthesis clusters is acetoxydehydroaustin. This chain is Methyltransferase ausD, found in Penicillium brasilianum.